A 649-amino-acid polypeptide reads, in one-letter code: tRNA-guanine(15) transglycosylase (649 aa).

The active-site Nucleophile is the aspartate 88. Positions 123 and 194 each coordinate substrate. Residues cysteine 280, cysteine 282, and cysteine 285 each contribute to the Zn(2+) site. One can recognise a PUA domain in the interval lysine 573–lysine 648.

This sequence belongs to the archaeosine tRNA-ribosyltransferase family. The cofactor is Zn(2+).

The enzyme catalyses guanosine(15) in tRNA + 7-cyano-7-deazaguanine = 7-cyano-7-carbaguanosine(15) in tRNA + guanine. It functions in the pathway tRNA modification; archaeosine-tRNA biosynthesis. Exchanges the guanine residue with 7-cyano-7-deazaguanine (preQ0) at position 15 in the dihydrouridine loop (D-loop) of archaeal tRNAs. This Methanococcus maripaludis (strain C6 / ATCC BAA-1332) protein is tRNA-guanine(15) transglycosylase.